Consider the following 322-residue polypeptide: Solute carrier family 35 member B1 (322 aa).

8 helical membrane-spanning segments follow: residues 12–32 (LRLP…GILQ), 51–71 (FALT…KILI), 85–105 (WLYA…NSAL), 136–156 (YPLA…LFMY), 168–188 (TVGF…LTGV), 210–230 (LWST…WEFL), 243–263 (ILLF…TVVY), and 285–305 (VILF…LVFL). A Di-lysine motif motif is present at residues 318–322 (KKTSH).

Belongs to the nucleotide-sugar transporter family. SLC35B subfamily.

It localises to the endoplasmic reticulum membrane. It catalyses the reaction ADP(in) + ATP(out) = ADP(out) + ATP(in). The catalysed reaction is UDP(out) + ATP(in) = UDP(in) + ATP(out). The enzyme catalyses UTP(out) + ATP(in) = UTP(in) + ATP(out). It carries out the reaction dATP(out) + ATP(in) = dATP(in) + ATP(out). In terms of biological role, ATP:ADP antiporter that catalyzes the exchange of ATP and ADP across the endoplasmic reticulum (ER) membrane. Imports ATP from the cytosol to the ER lumen and exports ADP in the opposite direction. Regulates ER energy metabolism and protein biogenesis. Appears to be part of a calcium-dependent ER to cytosol low energy response axis, where calcium efflux from ER to the cytosol triggers ATP import into the ER lumen to maintain sufficient ATP supply. Provides ATP to ER chaperone HSPA5 that drives protein folding and trafficking in the ER. Can transport dATP, UTP or UDP in exchange for ATP, but the physiological relevance of this process remains to be established. The chain is Solute carrier family 35 member B1 (Slc35b1) from Rattus norvegicus (Rat).